Reading from the N-terminus, the 1404-residue chain is DNA-directed RNA polymerase subunit beta' (1404 aa).

Zn(2+) contacts are provided by Cys-70, Cys-72, Cys-85, and Cys-88. Residues Asp-460, Asp-462, and Asp-464 each coordinate Mg(2+). Zn(2+) contacts are provided by Cys-825, Cys-899, Cys-906, and Cys-909.

It belongs to the RNA polymerase beta' chain family. In terms of assembly, the RNAP catalytic core consists of 2 alpha, 1 beta, 1 beta' and 1 omega subunit. When a sigma factor is associated with the core the holoenzyme is formed, which can initiate transcription. The cofactor is Mg(2+). It depends on Zn(2+) as a cofactor.

The catalysed reaction is RNA(n) + a ribonucleoside 5'-triphosphate = RNA(n+1) + diphosphate. DNA-dependent RNA polymerase catalyzes the transcription of DNA into RNA using the four ribonucleoside triphosphates as substrates. In Nitrosomonas eutropha (strain DSM 101675 / C91 / Nm57), this protein is DNA-directed RNA polymerase subunit beta'.